The following is a 617-amino-acid chain: V-type proton ATPase catalytic subunit A (617 aa).

Thr136 is modified (phosphothreonine). 250 to 257 (GAFGCGKT) is a binding site for ATP. Phosphoserine; by AMPK is present on Ser384.

It belongs to the ATPase alpha/beta chains family. As to quaternary structure, V-ATPase is a heteromultimeric enzyme made up of two complexes: the ATP-hydrolytic V1 complex and the proton translocation V0 complex. The V1 complex consists of three catalytic AB heterodimers that form a heterohexamer, three peripheral stalks each consisting of EG heterodimers, one central rotor including subunits D and F, and the regulatory subunits C and H. The proton translocation complex V0 consists of the proton transport subunit a, a ring of proteolipid subunits c9c'', rotary subunit d, subunits e and f, and the accessory subunits ATP6AP1/Ac45 and ATP6AP2/PRR. Interacts with the V0 complex V-ATPase subunit a4 ATP6V0A4. Interacts with WFS1. Interacts with alpha-crystallin B chain/CRYAB and with MTOR, forming a ternary complex. Post-translationally, phosphorylation at Ser-384 by AMPK down-regulates its enzyme activity.

The protein resides in the cytoplasm. It localises to the cytosol. The protein localises to the cytoplasmic vesicle. Its subcellular location is the secretory vesicle. It is found in the clathrin-coated vesicle membrane. The protein resides in the lysosome. The enzyme catalyses ATP + H2O + 4 H(+)(in) = ADP + phosphate + 5 H(+)(out). With respect to regulation, ATP hydrolysis occurs at the interface between the nucleotide-binding domains of subunits A and B. ATP hydrolysis triggers a conformational change in the subunits D and F, which induces a shift of subunit d. The c-ring is subsequently rotated and results in a continuous proton translocation across the membrane. Functionally, catalytic subunit of the V1 complex of vacuolar(H+)-ATPase (V-ATPase), a multisubunit enzyme composed of a peripheral complex (V1) that hydrolyzes ATP and a membrane integral complex (V0) that translocates protons. V-ATPase is responsible for acidifying and maintaining the pH of intracellular compartments and in some cell types, is targeted to the plasma membrane, where it is responsible for acidifying the extracellular environment. In aerobic conditions, involved in intracellular iron homeostasis, thus triggering the activity of Fe(2+) prolyl hydroxylase (PHD) enzymes, and leading to HIF1A hydroxylation and subsequent proteasomal degradation. May play a role in neurite development and synaptic connectivity. The protein is V-type proton ATPase catalytic subunit A (ATP6V1A) of Sus scrofa (Pig).